Consider the following 300-residue polypeptide: Putative heme-binding peroxidase (300 aa).

The Proton acceptor role is filled by H39. Disordered stretches follow at residues 44–64 and 116–135; these read YDKS…EAEG and GRTD…LPDA. A compositionally biased stretch (basic and acidic residues) spans 116-126; sequence GRTDFADDSRV. H163 lines the heme b pocket. W179 serves as the catalytic Tryptophan radical intermediate.

The protein belongs to the peroxidase family. Cytochrome c peroxidase subfamily. Requires heme b as cofactor.

Its function is as follows. Destroys radicals which are normally produced within the cells and which are toxic to biological systems. This is Putative heme-binding peroxidase from Pyricularia oryzae (strain 70-15 / ATCC MYA-4617 / FGSC 8958) (Rice blast fungus).